The chain runs to 302 residues: Succinate--CoA ligase [ADP-forming] subunit alpha (302 aa).

Residues 17 to 20, Lys-43, and 96 to 98 each bind CoA; these read TGST and ITE. A substrate-binding site is contributed by Tyr-159. The Tele-phosphohistidine intermediate role is filled by His-247.

It belongs to the succinate/malate CoA ligase alpha subunit family. In terms of assembly, heterotetramer of two alpha and two beta subunits.

It carries out the reaction succinate + ATP + CoA = succinyl-CoA + ADP + phosphate. It catalyses the reaction GTP + succinate + CoA = succinyl-CoA + GDP + phosphate. It participates in carbohydrate metabolism; tricarboxylic acid cycle; succinate from succinyl-CoA (ligase route): step 1/1. Succinyl-CoA synthetase functions in the citric acid cycle (TCA), coupling the hydrolysis of succinyl-CoA to the synthesis of either ATP or GTP and thus represents the only step of substrate-level phosphorylation in the TCA. The alpha subunit of the enzyme binds the substrates coenzyme A and phosphate, while succinate binding and nucleotide specificity is provided by the beta subunit. The protein is Succinate--CoA ligase [ADP-forming] subunit alpha of Staphylococcus aureus (strain MRSA252).